A 214-amino-acid chain; its full sequence is LOB domain-containing protein 7 (214 aa).

The 102-residue stretch at 12–113 folds into the LOB domain; sequence TACAACKHQR…TELNLTRQQI (102 aa).

This sequence belongs to the LOB domain-containing protein family.

This Arabidopsis thaliana (Mouse-ear cress) protein is LOB domain-containing protein 7 (LBD7).